The following is a 211-amino-acid chain: Potassium-transporting ATPase KdpC subunit (211 aa).

The chain crosses the membrane as a helical span at residues 13–35 (VVTMVLTGLLYPLAVTGLAQLLF).

Belongs to the KdpC family. In terms of assembly, the system is composed of three essential subunits: KdpA, KdpB and KdpC.

The protein resides in the cell membrane. Its function is as follows. Part of the high-affinity ATP-driven potassium transport (or Kdp) system, which catalyzes the hydrolysis of ATP coupled with the electrogenic transport of potassium into the cytoplasm. This subunit acts as a catalytic chaperone that increases the ATP-binding affinity of the ATP-hydrolyzing subunit KdpB by the formation of a transient KdpB/KdpC/ATP ternary complex. This chain is Potassium-transporting ATPase KdpC subunit, found in Myxococcus xanthus.